Here is a 107-residue protein sequence, read N- to C-terminus: Large ribosomal subunit protein uL24 (107 aa).

Belongs to the universal ribosomal protein uL24 family. Part of the 50S ribosomal subunit.

One of two assembly initiator proteins, it binds directly to the 5'-end of the 23S rRNA, where it nucleates assembly of the 50S subunit. In terms of biological role, one of the proteins that surrounds the polypeptide exit tunnel on the outside of the subunit. The protein is Large ribosomal subunit protein uL24 of Kosmotoga olearia (strain ATCC BAA-1733 / DSM 21960 / TBF 19.5.1).